We begin with the raw amino-acid sequence, 130 residues long: Large ribosomal subunit protein bL19 (130 aa).

Belongs to the bacterial ribosomal protein bL19 family.

Its function is as follows. This protein is located at the 30S-50S ribosomal subunit interface and may play a role in the structure and function of the aminoacyl-tRNA binding site. The chain is Large ribosomal subunit protein bL19 from Mycoplasma capricolum subsp. capricolum (strain California kid / ATCC 27343 / NCTC 10154).